The chain runs to 135 residues: Fluoride-specific ion channel FluC (135 aa).

Helical transmembrane passes span 7-27 (IAAISLGASLGALARYGLGLA), 37-57 (IGTLAANLIAAYVVGVTIAYV), 70-90 (FMITGLAGGLSTFSTFTAELF), and 105-125 (LGLHVGGSLALLMLGMLTIGL). Positions 77 and 80 each coordinate Na(+).

This sequence belongs to the fluoride channel Fluc/FEX (TC 1.A.43) family.

Its subcellular location is the cell inner membrane. It catalyses the reaction fluoride(in) = fluoride(out). With respect to regulation, na(+) is not transported, but it plays an essential structural role and its presence is essential for fluoride channel function. Its function is as follows. Fluoride-specific ion channel. Important for reducing fluoride concentration in the cell, thus reducing its toxicity. This chain is Fluoride-specific ion channel FluC, found in Xanthomonas oryzae pv. oryzae (strain MAFF 311018).